A 902-amino-acid chain; its full sequence is MKIAVIGQSLFGREVYRELLKEGHQVVGVFTIPDKNGKADPLGADAEKDGIPVFKFPRWRVKGQAIPEVVEKYKALEAELNVLPFCSQFIPMEVIDCPKHGSIIYHPSILPRHRGASAINWTLMQGDKIGGFTVFWADDGLDTGDILLQRQCEVLPDDTVNTIYNRFLFPEGVKGMVEAVRLIAEGNAPRIKQPTEGATYDPMQKKENAKINWDQPAEDIHNFIRGNDKVPGAWTVVDDQQLTFFGSSFTRNGPAPDGQPLEIPGASRPALVTKTGLVLFGNDGERLTVKNIQFEDGKMIPASQYFKTADSAALQLSEEEQKVSEEIRAAWRRILTNVSEIEDSTDFFKAGAASMDVVRLVEEVKLKCNGLQLQNEDVYMATKFEEFIQMVVRRMRGEDGEEELVIDYVEKEINNMTVKIPHQLFINGQFMDAEGGKSYDTINPTDGTAICKVSLAQISDIDRAVAAAKEAFENGEWGKMNPRDRGRLLYRLADLMEEHQEELATIESIDSGAVYTLALKTHVGMSIQTFRYFAGWCDKIQGRTIPINQARPNRNLTFTRREPIGVCGIVIPWNYPLMMLAWKTAACLTAGNTVVLKPAQVTPLTALKFAELSVKAGIPKGVINILPGAGSLIGQRLSDHPDVRKIGFTGSTPIGKQIMKSCAVSNVKKVSLELGGKSPLIIFHDCDLDKAVRMGMSSVFFNKGENCIAAGRLFLEESIHDEFVKRVVEEVKKMKIGDPLDRSTDHGPQNHKAHLDKLIEYCQTGVKEGGKLVYGGKQVERPGFFFEPTIFTDVTDEMFIAKEESFGPVMIISKFNDGDIDGVLKRANDSEFGLASGVFTKDINKALYVSEKLQAGTVFVNTYNKTDVAAPFGGFKQSGFGKDLGEEALNEYLKTKAVTIEY.

The tract at residues 1–310 (MKIAVIGQSL…PASQYFKTAD (310 aa)) is hydrolase domain. 88 to 90 (QFI) serves as a coordination point for (6R)-10-formyltetrahydrofolate. The Proton donor role is filled by His106. Asp142 provides a ligand contact to (6R)-10-formyltetrahydrofolate. The region spanning 318 to 395 (EEEQKVSEEI…EFIQMVVRRM (78 aa)) is the Carrier domain. An O-(pantetheine 4'-phosphoryl)serine modification is found at Ser354. An aldehyde dehydrogenase domain region spans residues 417–902 (TVKIPHQLFI…LKTKAVTIEY (486 aa)). Residues 571 to 573 (IPW), 597 to 600 (KPAQ), 630 to 635 (GSLIGQ), 650 to 651 (GS), and 673 to 674 (EL) each bind NADP(+). Glu673 serves as the catalytic Proton acceptor. The active-site Proton donor is Cys707. NADP(+) contacts are provided by residues Lys757 and 804–806 (ESF).

The protein in the N-terminal section; belongs to the GART family. This sequence in the C-terminal section; belongs to the aldehyde dehydrogenase family. ALDH1L subfamily. As to quaternary structure, homotetramer. Phosphopantetheinylation at Ser-354 by AASDHPPT is required for the formyltetrahydrofolate dehydrogenase activity.

The protein resides in the cytoplasm. It is found in the cytosol. The enzyme catalyses (6R)-10-formyltetrahydrofolate + NADP(+) + H2O = (6S)-5,6,7,8-tetrahydrofolate + CO2 + NADPH + H(+). Functionally, cytosolic 10-formyltetrahydrofolate dehydrogenase that catalyzes the NADP(+)-dependent conversion of 10-formyltetrahydrofolate to tetrahydrofolate and carbon dioxide. May also have an NADP(+)-dependent aldehyde dehydrogenase activity towards formaldehyde, acetaldehyde, propionaldehyde, and benzaldehyde. In Xenopus laevis (African clawed frog), this protein is Cytosolic 10-formyltetrahydrofolate dehydrogenase (aldh1l1).